The following is a 140-amino-acid chain: Oocyte-expressed protein homolog (140 aa).

The region spanning 40 to 101 (PLVFFLEAWL…AVQRQVKSVL (62 aa)) is the KH; atypical domain.

The protein belongs to the KHDC1 family. As to quaternary structure, component of the subcortical maternal complex (SCMC), at least composed of NLRP5, KHDC3, OOEP, and TLE6. Within the complex, interacts with NLRP5, KHDC3 and TLE6. As part of the SCMC interacts with the SCMC-associated protein NLRP4F. The SCMC may facilitate translocation of its components between the nuclear and cytoplasmic compartments. Forms a scaffold complex with KHDC3/FILIA, and interacts with BLM and TRIM25 at DNA replication forks.

It is found in the cytoplasm. The protein localises to the nucleus. Functionally, component of the subcortical maternal complex (SCMC), a multiprotein complex that plays a key role in early embryonic development. The SCMC complex is a structural constituent of cytoplasmic lattices, which consist in fibrous structures found in the cytoplasm of oocytes and preimplantation embryos. They are required to store maternal proteins critical for embryonic development, such as proteins that control epigenetic reprogramming of the preimplantation embryo, and prevent their degradation or activation. As part of the OOEP-KHDC3 scaffold, recruits BLM and TRIM25 to DNA replication forks, thereby promoting the ubiquitination of BLM by TRIM25, enhancing BLM retainment at replication forks and therefore promoting stalled replication fork restart. Positively regulates the homologous recombination-mediated DNA double-strand break (DSB) repair pathway by regulating ATM activation and RAD51 recruitment to DSBs in oocytes. Thereby contributes to oocyte survival and the resumption and completion of meiosis. The polypeptide is Oocyte-expressed protein homolog (OOEP) (Bos taurus (Bovine)).